The sequence spans 260 residues: Cobalt transport protein CbiM (260 aa).

A signal peptide spans 1-34 (MKLGESMKKNATLSVKIIAFLGVLIFTVMPVANA). A run of 6 helical transmembrane segments spans residues 39 to 59 (EGYL…PFLI), 77 to 97 (LLFA…LPSF), 109 to 129 (LSTI…VLLF), 132 to 152 (LLLA…MAVM), 175 to 195 (IFFS…IQLG), and 215 to 235 (VFAI…VLIF).

The protein belongs to the CbiM family. In terms of assembly, forms an energy-coupling factor (ECF) transporter complex composed of an ATP-binding protein (A component, CbiO), a transmembrane protein (T component, CbiQ) and 2 possible substrate-capture proteins (S components, CbiM and CbiN) of unknown stoichimetry.

The protein localises to the cell membrane. It functions in the pathway cofactor biosynthesis; adenosylcobalamin biosynthesis. Its function is as follows. Part of the energy-coupling factor (ECF) transporter complex CbiMNOQ involved in cobalt import. This is Cobalt transport protein CbiM from Clostridium cellulovorans (strain ATCC 35296 / DSM 3052 / OCM 3 / 743B).